The chain runs to 572 residues: Proline--tRNA ligase (572 aa).

This sequence belongs to the class-II aminoacyl-tRNA synthetase family. ProS type 1 subfamily. In terms of assembly, homodimer.

The protein resides in the cytoplasm. The enzyme catalyses tRNA(Pro) + L-proline + ATP = L-prolyl-tRNA(Pro) + AMP + diphosphate. Its function is as follows. Catalyzes the attachment of proline to tRNA(Pro) in a two-step reaction: proline is first activated by ATP to form Pro-AMP and then transferred to the acceptor end of tRNA(Pro). As ProRS can inadvertently accommodate and process non-cognate amino acids such as alanine and cysteine, to avoid such errors it has two additional distinct editing activities against alanine. One activity is designated as 'pretransfer' editing and involves the tRNA(Pro)-independent hydrolysis of activated Ala-AMP. The other activity is designated 'posttransfer' editing and involves deacylation of mischarged Ala-tRNA(Pro). The misacylated Cys-tRNA(Pro) is not edited by ProRS. In Caldicellulosiruptor saccharolyticus (strain ATCC 43494 / DSM 8903 / Tp8T 6331), this protein is Proline--tRNA ligase.